A 346-amino-acid polypeptide reads, in one-letter code: MAKRKLTQNQTRRIQSNNAKTLHRHKKKEIEWSDEMLGESQEGVVVTRYSIHADVENEQGEIYRCNLRRTLSSLVVGDKVVWRKGNEQLQGVSGVIEAIHPRENEISRPDYYDGLKPIAANIDRIIIVSAVLPTLSLNIIDRYLVVCEIAGITPLIVLNKVDLLAQEQRQEIEDQLKIYQDIGYEILMISAKSGENMEKLTALLAQGTAIFVGQSGVGKSSLINHILPSVNAQVGDVSETSGLGQHTTTSSRLYHLPQGGNLIDSPGIREFGLWHLDAEQITKGYREFQYVLGTCKFRDCKHLSDPGCALREAVEQGKISPVRYDNYHRLIESLSETKSQRHFSLV.

The interval 1-25 is disordered; that stretch reads MAKRKLTQNQTRRIQSNNAKTLHRH. Residues 7–20 are compositionally biased toward polar residues; that stretch reads TQNQTRRIQSNNAK. Residues 103-271 enclose the CP-type G domain; sequence ENEISRPDYY…LIDSPGIREF (169 aa). Residues 159 to 162 and 213 to 221 contribute to the GTP site; these read NKVD and GQSGVGKSS. Zn(2+) is bound by residues cysteine 295, cysteine 300, histidine 302, and cysteine 308.

It belongs to the TRAFAC class YlqF/YawG GTPase family. RsgA subfamily. Monomer. Associates with 30S ribosomal subunit, binds 16S rRNA. The cofactor is Zn(2+).

Its subcellular location is the cytoplasm. In terms of biological role, one of several proteins that assist in the late maturation steps of the functional core of the 30S ribosomal subunit. Helps release RbfA from mature subunits. May play a role in the assembly of ribosomal proteins into the subunit. Circularly permuted GTPase that catalyzes slow GTP hydrolysis, GTPase activity is stimulated by the 30S ribosomal subunit. In Haemophilus influenzae (strain ATCC 51907 / DSM 11121 / KW20 / Rd), this protein is Small ribosomal subunit biogenesis GTPase RsgA.